Here is a 524-residue protein sequence, read N- to C-terminus: Unconventional prefoldin RPB5 interactor (524 aa).

3 disordered regions span residues 1 to 20 (MEAP…LRAP), 284 to 320 (SVNG…EDNS), and 335 to 373 (VRIN…ELPM). Residues 296–307 (DDGDNNDDGGDS) show a composition bias toward acidic residues. A Phosphoserine; by RPS6KB1 modification is found at Ser-361. Position 431 is a phosphoserine (Ser-431).

The protein belongs to the RNA polymerase II subunit 5-mediating protein family. Homodimer. Component of the PAQosome complex which is responsible for the biogenesis of several protein complexes and which consists of R2TP complex members RUVBL1, RUVBL2, RPAP3 and PIH1D1, URI complex members PFDN2, PFDN6, PDRG1, UXT and URI1 as well as ASDURF, POLR2E and DNAAF10/WDR92. Interacts with POLR2E/RPB5, RUVBL2 and RUVBL1. Interacts with PFDN2, PFDN4 and STAP1; the interactions are phosphorylation-dependent and occur in a growth-dependent manner in the mitochondrion. Interacts with UXT. Interacts with PPP1CC; the interaction is phosphorylation-dependent and occurs in a growth factor-dependent manner. Interacts (via the middle C-terminal region) with GTF2F1 and GTF2F2. Interacts with DMAP1. Interacts with TSC1 and TSC2. Interacts with PRPF8 and EFTUD2 in a ZNHIT2-dependent manner. In terms of processing, phosphorylated. Phosphorylation occurs essentially on serine residues. Phosphorylation occurs in response to androgen treatment in prostate cancer cells in a mTOR-dependent manner. Phosphorylated; hyperhosphorylated in mitochondria in a mTORC-dependent signaling pathway. Phosphorylated at Ser-361 by RPS6KB1 in a growth factor- and rapamycin-dependent manner. S6K1-mediated mitochondrial phosphorylation at Ser-361 disrupts the URI1-PPP1CC complex in the mitochondrion, relieves PPP1CC phosphatase inhibition activity and hence engages a negative feedback diminishing RPS6KB1 kinase activity, preventing sustained S6K1-dependent signaling.

The protein resides in the nucleus. It is found in the cytoplasm. It localises to the mitochondrion. Its subcellular location is the cell projection. The protein localises to the dendrite. Its function is as follows. Involved in gene transcription regulation. Acts as a transcriptional repressor in concert with the corepressor UXT to regulate androgen receptor (AR) transcription. May act as a tumor suppressor to repress AR-mediated gene transcription and to inhibit anchorage-independent growth in prostate cancer cells. Required for cell survival in ovarian cancer cells. Together with UXT, associates with chromatin to the NKX3-1 promoter region. Plays a central role in maintaining S6K1 signaling and BAD phosphorylation under normal growth conditions thereby protecting cells from potential deleterious effects of sustained S6K1 signaling. The URI1-PPP1CC complex acts as a central component of a negative feedback mechanism that counteracts excessive S6K1 survival signaling to BAD in response to growth factors. Mediates inhibition of PPP1CC phosphatase activity in mitochondria. Coordinates the regulation of nutrient-sensitive gene expression availability in a mTOR-dependent manner. Seems to be a scaffolding protein able to assemble a prefoldin-like complex that contains PFDs and proteins with roles in transcription and ubiquitination. The sequence is that of Unconventional prefoldin RPB5 interactor (URI1) from Bos taurus (Bovine).